A 477-amino-acid chain; its full sequence is Calcium/calmodulin-dependent protein kinase type 1G (477 aa).

The 255-residue stretch at 23–277 (FIFMEVLGSG…CEKALRHPWI (255 aa)) folds into the Protein kinase domain. ATP is bound by residues 29–37 (LGSGAFSEV) and K52. Catalysis depends on D143, which acts as the Proton acceptor. An autoinhibitory domain region spans residues 277 to 317 (IDGNTALHRDIYPSVSLQIQKNFAKSKWRQAFNAAAVVHHM). A calmodulin-binding region spans residues 297 to 318 (KNFAKSKWRQAFNAAAVVHHMR). Residues 326–388 (SPSVRQEVEN…SRPSAPSGGR (63 aa)) form a disordered region. A compositionally biased stretch (low complexity) spans 376 to 388 (SHSSRPSAPSGGR).

This sequence belongs to the protein kinase superfamily. CAMK Ser/Thr protein kinase family. CaMK subfamily. In terms of processing, may be prenylated on Cys-474. As to expression, highly expressed in brain, in neuronal cell bodies of the central nucleus of amygdala and ventromedial hypothalamic nucleus. Also detected in heart, testis, and kidney.

The protein resides in the cytoplasm. Its subcellular location is the golgi apparatus membrane. It localises to the cell membrane. It catalyses the reaction L-seryl-[protein] + ATP = O-phospho-L-seryl-[protein] + ADP + H(+). It carries out the reaction L-threonyl-[protein] + ATP = O-phospho-L-threonyl-[protein] + ADP + H(+). With respect to regulation, activated by Ca(2+)/calmodulin. Binding of calmodulin is thought to result in a conformational change and leads to activation through phosphorylation by CAMKK1. In terms of biological role, calcium/calmodulin-dependent protein kinase belonging to a proposed calcium-triggered signaling cascade. In vitro phosphorylates transcription factor CREB1. This Mus musculus (Mouse) protein is Calcium/calmodulin-dependent protein kinase type 1G (Camk1g).